The primary structure comprises 1182 residues: Myosin IC heavy chain (1182 aa).

Residues 15-698 (EGLDDMTLLS…MLFSLEETRE (684 aa)) enclose the Myosin motor domain. Residue 109 to 116 (GESGAGKT) coordinates ATP. Residues 571–593 (AAELVATLMKSTPHYIRTIKPND) are actin-binding. In terms of domain architecture, TH1 spans 774–957 (RNRFSMISVR…QFHIASGLPA (184 aa)). 2 disordered regions span residues 999 to 1052 (KPAP…PAPG) and 1064 to 1103 (SKPL…PAGQ). The segment covering 1013-1042 (KKPAPTAPGGAPMMKKPAPAPGGAPMMKKP) has biased composition (low complexity). Positions 1081-1092 (PTAPGGPAPAGA) are enriched in pro residues. In terms of domain architecture, SH3 spans 1123 to 1182 (PPPQQYIALYEYDAMQPDELTFKENDVINLIKKVDADWWQGELVRTKQIGMLPSNYVQQI).

Belongs to the TRAFAC class myosin-kinesin ATPase superfamily. Myosin family. In terms of assembly, myosin I heavy chain is single-headed. Dimer of a heavy and a light chain. Inability to self-assemble into filaments.

The protein localises to the cell projection. It localises to the lamellipodium. In terms of biological role, myosin is a protein that binds to actin and has ATPase activity that is activated by actin. Involved in the process of phagocytosis and appears to support streaming behavior. This chain is Myosin IC heavy chain (myoC), found in Dictyostelium discoideum (Social amoeba).